Consider the following 207-residue polypeptide: Segregation and condensation protein B (207 aa).

It belongs to the ScpB family. Homodimer. Homodimerization may be required to stabilize the binding of ScpA to the Smc head domains. Component of a cohesin-like complex composed of ScpA, ScpB and the Smc homodimer, in which ScpA and ScpB bind to the head domain of Smc. The presence of the three proteins is required for the association of the complex with DNA.

It is found in the cytoplasm. In terms of biological role, participates in chromosomal partition during cell division. May act via the formation of a condensin-like complex containing Smc and ScpA that pull DNA away from mid-cell into both cell halves. The sequence is that of Segregation and condensation protein B from Mycoplasmopsis pulmonis (strain UAB CTIP) (Mycoplasma pulmonis).